Consider the following 401-residue polypeptide: Probable peptidoglycan glycosyltransferase FtsW (401 aa).

The Cytoplasmic portion of the chain corresponds to Met-1–Arg-26. Residues Leu-27–Val-47 form a helical membrane-spanning segment. The Periplasmic portion of the chain corresponds to Ser-48–Ala-65. Residues Val-66–Phe-86 form a helical membrane-spanning segment. Residues Tyr-87–Arg-88 are Cytoplasmic-facing. The helical transmembrane segment at Gly-89–Val-109 threads the bilayer. Over Gly-110–Arg-118 the chain is Periplasmic. A helical membrane pass occupies residues Trp-119–Ile-139. Residues Tyr-140 to Asn-154 lie on the Cytoplasmic side of the membrane. A helical transmembrane segment spans residues Thr-155–Ala-175. Residues Gln-176–Gly-180 are Periplasmic-facing. A helical transmembrane segment spans residues Thr-181 to Trp-201. Arg-202 is a topological domain (cytoplasmic). Residues Ile-203–Tyr-223 traverse the membrane as a helical segment. Topologically, residues Arg-224 to Asp-278 are periplasmic. A helical transmembrane segment spans residues Phe-279–Leu-299. Residues Phe-300–Gly-322 lie on the Cytoplasmic side of the membrane. The chain crosses the membrane as a helical span at residues Ala-323–Val-343. At Thr-344 to Thr-354 the chain is on the periplasmic side. The helical transmembrane segment at Leu-355 to Leu-375 threads the bilayer. The Cytoplasmic portion of the chain corresponds to Leu-376–Pro-401.

It belongs to the SEDS family. FtsW subfamily.

The protein localises to the cell inner membrane. It carries out the reaction [GlcNAc-(1-&gt;4)-Mur2Ac(oyl-L-Ala-gamma-D-Glu-L-Lys-D-Ala-D-Ala)](n)-di-trans,octa-cis-undecaprenyl diphosphate + beta-D-GlcNAc-(1-&gt;4)-Mur2Ac(oyl-L-Ala-gamma-D-Glu-L-Lys-D-Ala-D-Ala)-di-trans,octa-cis-undecaprenyl diphosphate = [GlcNAc-(1-&gt;4)-Mur2Ac(oyl-L-Ala-gamma-D-Glu-L-Lys-D-Ala-D-Ala)](n+1)-di-trans,octa-cis-undecaprenyl diphosphate + di-trans,octa-cis-undecaprenyl diphosphate + H(+). It functions in the pathway cell wall biogenesis; peptidoglycan biosynthesis. In terms of biological role, peptidoglycan polymerase that is essential for cell division. The chain is Probable peptidoglycan glycosyltransferase FtsW from Alkalilimnicola ehrlichii (strain ATCC BAA-1101 / DSM 17681 / MLHE-1).